A 756-amino-acid polypeptide reads, in one-letter code: NUT family member 2F (756 aa).

Disordered regions lie at residues 173–200 (GNARPWPQGAHGEGSLAPSQAKARPDDS), 293–438 (IQKS…TSDP), 511–639 (RAAP…LPGM), and 653–756 (RLSQ…HCSQ). The segment covering 304–321 (SLPPPAPPRLEPRGPPAP) has biased composition (pro residues). Residues 417–427 (EGQREKGKVEQ) show a composition bias toward basic and acidic residues. Residues 543 to 560 (QRVSVETSPPQTAAQDPQ) are compositionally biased toward polar residues. Residues 654–665 (LSQSPVPSSGLL) are compositionally biased toward low complexity. Over residues 746-756 (SRRKKKRHCSQ) the composition is skewed to basic residues.

This sequence belongs to the NUT family.

The protein is NUT family member 2F (NUTM2F) of Homo sapiens (Human).